The chain runs to 61 residues: Adipokinetic prohormone type 2 (61 aa).

Residues 1–22 (MTQSCTLTLVLVVAVLAALATA) form the signal peptide. At Gln-23 the chain carries Pyrrolidone carboxylic acid. Trp-30 is subject to Tryptophan amide.

The protein belongs to the AKH/HRTH/RPCH family. Adipokinetic hormone precursor-related peptide (APRP) can form three type of disulfide-bond dimers: p1 (alpha-alpha), p2 (alpha-beta), and p3 (beta-beta).

It localises to the secreted. Its function is as follows. This hormone, released from cells in the corpora cardiaca, causes release of diglycerides from the fat body and stimulation of muscles to use these diglycerides as an energy source during energy-demanding processes. This chain is Adipokinetic prohormone type 2, found in Locusta migratoria (Migratory locust).